The sequence spans 447 residues: Phosphoglucosamine mutase (447 aa).

The active-site Phosphoserine intermediate is the Ser-100. Mg(2+)-binding residues include Ser-100, Asp-239, Asp-241, and Asp-243. Ser-100 carries the post-translational modification Phosphoserine.

The protein belongs to the phosphohexose mutase family. Requires Mg(2+) as cofactor. Post-translationally, activated by phosphorylation.

The catalysed reaction is alpha-D-glucosamine 1-phosphate = D-glucosamine 6-phosphate. In terms of biological role, catalyzes the conversion of glucosamine-6-phosphate to glucosamine-1-phosphate. This chain is Phosphoglucosamine mutase, found in Halalkalibacterium halodurans (strain ATCC BAA-125 / DSM 18197 / FERM 7344 / JCM 9153 / C-125) (Bacillus halodurans).